We begin with the raw amino-acid sequence, 735 residues long: Disintegrin and metalloproteinase domain-containing protein 2 (735 aa).

The N-terminal stretch at 1 to 18 (MWLILLLLSGLSELGGLS) is a signal peptide. Residues 19–180 (QSQTEGTREK…YKIRSIKPQR (162 aa)) constitute a propeptide that is removed on maturation. Residues 19–686 (QSQTEGTREK…ASAYRSKSPR (668 aa)) are Extracellular-facing. N128, N226, and N279 each carry an N-linked (GlcNAc...) asparagine glycan. In terms of domain architecture, Peptidase M12B spans 184 to 381 (HYLEIHIVVE…QSSHCLQNQP (198 aa)). 4 cysteine pairs are disulfide-bonded: C293/C376, C335/C360, C337/C342, and C449/C469. N-linked (GlcNAc...) asparagine glycosylation is found at N359, N463, N489, N569, and N585. Residues 389–476 (MAVCGNGEVE…EVCEDFFVQN (88 aa)) enclose the Disintegrin domain. The EGF-like domain maps to 615 to 648 (LGYDCNLEKCNHHGVCNNKKNCHCDPTYLPPDCK). 3 disulfide bridges follow: C619-C630, C624-C636, and C638-C647. A helical transmembrane segment spans residues 687–707 (WPFFLIIPFYVVILVLIGMLV). At 708–735 (KVYSQRMKWRMDDFSSEEQFESESESKD) the chain is on the cytoplasmic side. Phosphoserine is present on S729.

Heterodimer with ADAM1/fertilin subunit alpha. The signal and the metalloprotease domain are cleaved during the epididymal maturation of the spermatozoa. In terms of tissue distribution, expressed in the testis and testicular sperm (at protein level).

Its subcellular location is the membrane. Its function is as follows. Sperm surface membrane protein that may be involved in sperm-egg plasma membrane adhesion and fusion during fertilization. Could have a direct role in sperm-zona binding or migration of sperm from the uterus into the oviduct. Interactions with egg membrane could be mediated via binding between its disintegrin-like domain to one or more integrins receptors on the egg. This is a non catalytic metalloprotease-like protein. This chain is Disintegrin and metalloproteinase domain-containing protein 2, found in Mus musculus (Mouse).